A 188-amino-acid chain; its full sequence is Elongation factor P (188 aa).

Belongs to the elongation factor P family.

It localises to the cytoplasm. It participates in protein biosynthesis; polypeptide chain elongation. Involved in peptide bond synthesis. Stimulates efficient translation and peptide-bond synthesis on native or reconstituted 70S ribosomes in vitro. Probably functions indirectly by altering the affinity of the ribosome for aminoacyl-tRNA, thus increasing their reactivity as acceptors for peptidyl transferase. The sequence is that of Elongation factor P from Bradyrhizobium sp. (strain BTAi1 / ATCC BAA-1182).